The sequence spans 209 residues: Uracil phosphoribosyltransferase (209 aa).

Residues Arg79, Arg104, and 131 to 139 (DPMLATGGS) contribute to the 5-phospho-alpha-D-ribose 1-diphosphate site. Residues Ile194 and 199 to 201 (GDA) contribute to the uracil site. Asp200 is a 5-phospho-alpha-D-ribose 1-diphosphate binding site.

It belongs to the UPRTase family. As to quaternary structure, homodimer. The cofactor is Mg(2+).

The catalysed reaction is UMP + diphosphate = 5-phospho-alpha-D-ribose 1-diphosphate + uracil. It functions in the pathway pyrimidine metabolism; UMP biosynthesis via salvage pathway; UMP from uracil: step 1/1. With respect to regulation, allosterically activated by GTP. Its function is as follows. Catalyzes the conversion of uracil and 5-phospho-alpha-D-ribose 1-diphosphate (PRPP) to UMP and diphosphate. This is Uracil phosphoribosyltransferase from Bacillus caldolyticus.